The sequence spans 107 residues: Ribosome-associated factor Y (107 aa).

The interval leucine 85 to asparagine 107 is disordered.

Associates mainly with 70S ribosomes.

In terms of biological role, during stationary phase, prevents 70S dimer formation, probably in order to regulate translation efficiency during transition between the exponential and the stationary phases. In addition, during environmental stress such as cold shock or excessive cell density at stationary phase, stabilizes the 70S ribosome against dissociation, inhibits translation initiation and increase translation accuracy. When normal growth conditions are restored, is quickly released from the ribosome. This is Ribosome-associated factor Y from Haemophilus influenzae (strain ATCC 51907 / DSM 11121 / KW20 / Rd).